The following is a 182-amino-acid chain: Ribosome-recycling factor (182 aa).

It belongs to the RRF family.

The protein localises to the cytoplasm. Responsible for the release of ribosomes from messenger RNA at the termination of protein biosynthesis. May increase the efficiency of translation by recycling ribosomes from one round of translation to another. This chain is Ribosome-recycling factor, found in Synechococcus sp. (strain CC9605).